Here is a 616-residue protein sequence, read N- to C-terminus: Endonuclease 8-like 3 (616 aa).

The FPG-type zinc-finger motif lies at 271 to 305; the sequence is KVYKRPNCGQCGTKITVCRLGEHNRMTYFCPKCQK. Residues 341 to 370 form a RanBP2-type zinc finger; the sequence is KEEHWACAVCTLINKPSDKQCDACLTLRPE. The interval 491–524 is disordered; that stretch reads LKTGHTTSNTIHLSSTISSPQSKMTGDAAAKTGN. Polar residues predominate over residues 494 to 514; the sequence is GHTTSNTIHLSSTISSPQSKM. Positions 527, 530, 553, 561, 574, 576, 599, and 607 each coordinate Zn(2+). GRF-type zinc fingers lie at residues 527 to 570 and 574 to 616; these read CSAH…ADLH and CNHG…AKTE.

This sequence belongs to the FPG family.

The protein resides in the nucleus. Its subcellular location is the chromosome. It catalyses the reaction 2'-deoxyribonucleotide-(2'-deoxyribose 5'-phosphate)-2'-deoxyribonucleotide-DNA = a 3'-end 2'-deoxyribonucleotide-(2,3-dehydro-2,3-deoxyribose 5'-phosphate)-DNA + a 5'-end 5'-phospho-2'-deoxyribonucleoside-DNA + H(+). Functionally, DNA glycosylase which prefers single-stranded DNA (ssDNA), or partially ssDNA structures such as bubble and fork structures, to double-stranded DNA (dsDNA). Mediates interstrand cross-link repair in response to replication stress: recruited to replication stress sites via interaction with ubiquitinated CMG helicase and acts by mediating DNA glycosylase activity. Cleaves one of the two N-glycosyl bonds comprising the interstrand cross-link, which avoids the formation of a double-strand break but generates an abasic site that is bypassed by translesion synthesis polymerases. The sequence is that of Endonuclease 8-like 3 from Xenopus laevis (African clawed frog).